Consider the following 627-residue polypeptide: MKYKRKLSLSVVFLFVFYLAAVTSDLESDRRALLAVRNSVRGRPLLWNMSASSPCNWHGVHCDAGRVTALRLPGSGLFGSLPIGGIGNLTQLKTLSLRFNSLSGPIPSDFSNLVLLRYLYLQGNAFSGEIPSLLFTLPSIIRINLGENKFSGRIPDNVNSATRLVTLYLERNQLSGPIPEITLPLQQFNVSSNQLNGSIPSSLSSWPRTAFEGNTLCGKPLDTCEAESPNGGDAGGPNTPPEKKDSDKLSAGAIVGIVIGCVVGLLLLLLILFCLCRKRKKEENVPSRNVEAPVAAATSSAAIPKETVVVVPPAKATGSESGAVNKDLTFFVKSFGEFDLDGLLKASAEVLGKGTVGSSYKASFEHGLVVAVKRLRDVVVPEKEFRERLHVLGSMSHANLVTLIAYYFSRDEKLLVFEYMSKGSLSAILHGNKGNGRTPLNWETRAGIALGAARAISYLHSRDGTTSHGNIKSSNILLSDSYEAKVSDYGLAPIISSTSAPNRIDGYRAPEITDARKISQKADVYSFGVLILELLTGKSPTHQQLNEEGVDLPRWVQSVTEQQTPSDVLDPELTRYQPEGNENIIRLLKIGMSCTAQFPDSRPSMAEVTRLIEEVSHSSGSPNPVSD.

The first 23 residues, 1 to 23 (MKYKRKLSLSVVFLFVFYLAAVT), serve as a signal peptide directing secretion. LRR repeat units follow at residues 91–112 (QLKT…DFSN), 115–137 (LLRY…LFTL), 139–161 (SIIR…VNSA), 163–184 (RLVT…ITLP), and 185–206 (LQQF…LSSW). The disordered stretch occupies residues 222-246 (DTCEAESPNGGDAGGPNTPPEKKDS). A helical membrane pass occupies residues 253 to 273 (AIVGIVIGCVVGLLLLLLILF). In terms of domain architecture, Protein kinase spans 345–620 (KASAEVLGKG…LIEEVSHSSG (276 aa)). Position 347 is a phosphoserine (S347). Residues 351-359 (LGKGTVGSS) and K373 each bind ATP. Residues 389 to 409 (LHVLGSMSHANLVTLIAYYFS) form a helical membrane-spanning segment. Position 424 is a phosphoserine (S424). T444 carries the post-translational modification Phosphothreonine. S519 carries the post-translational modification Phosphoserine. Position 595 is a phosphothreonine (T595). Phosphoserine is present on residues S621 and S626.

Belongs to the protein kinase superfamily. Ser/Thr protein kinase family.

Its subcellular location is the membrane. This Arabidopsis thaliana (Mouse-ear cress) protein is Probable inactive receptor kinase At3g02880.